The chain runs to 325 residues: MIARIWSGESPLWRLLLPLSWLYGLVSGAIRLSYKLGLKRAWRAPVPVVVVGNLTAGGNGKTPVVIWLVEKLQQRGVRVGVVSRGYGGKAAAYPLLLTPETTTAEAGDEPVLIYQRTGAPVAVAPERAAAVKAILAAHNVQIIITDDGLQHYRLARDIEIVVIDGVRRFGNGWWLPAGPMRERASRLKTVDAAIVNGGVARAGEIPMQLAPGLAVNLRTGARCDVAQLSNIVAMAGIGHPPRFFATLEACGAHPQKCVPLADHQTLAPADVQALVGEGQTLVMTEKDAVKCRAFAEDNWWFLPVDARLSGEQPDKLLQHITSLVR.

An ATP-binding site is contributed by 55–62 (TAGGNGKT).

This sequence belongs to the LpxK family.

The enzyme catalyses a lipid A disaccharide + ATP = a lipid IVA + ADP + H(+). Its pathway is glycolipid biosynthesis; lipid IV(A) biosynthesis; lipid IV(A) from (3R)-3-hydroxytetradecanoyl-[acyl-carrier-protein] and UDP-N-acetyl-alpha-D-glucosamine: step 6/6. In terms of biological role, transfers the gamma-phosphate of ATP to the 4'-position of a tetraacyldisaccharide 1-phosphate intermediate (termed DS-1-P) to form tetraacyldisaccharide 1,4'-bis-phosphate (lipid IVA). The chain is Tetraacyldisaccharide 4'-kinase from Salmonella dublin (strain CT_02021853).